The sequence spans 156 residues: ATP synthase subunit b (156 aa).

The helical transmembrane segment at 7 to 27 (LIGQLIAFALFVAFCMKFVWP) threads the bilayer.

This sequence belongs to the ATPase B chain family. As to quaternary structure, F-type ATPases have 2 components, F(1) - the catalytic core - and F(0) - the membrane proton channel. F(1) has five subunits: alpha(3), beta(3), gamma(1), delta(1), epsilon(1). F(0) has three main subunits: a(1), b(2) and c(10-14). The alpha and beta chains form an alternating ring which encloses part of the gamma chain. F(1) is attached to F(0) by a central stalk formed by the gamma and epsilon chains, while a peripheral stalk is formed by the delta and b chains.

The protein resides in the cell inner membrane. Functionally, f(1)F(0) ATP synthase produces ATP from ADP in the presence of a proton or sodium gradient. F-type ATPases consist of two structural domains, F(1) containing the extramembraneous catalytic core and F(0) containing the membrane proton channel, linked together by a central stalk and a peripheral stalk. During catalysis, ATP synthesis in the catalytic domain of F(1) is coupled via a rotary mechanism of the central stalk subunits to proton translocation. Its function is as follows. Component of the F(0) channel, it forms part of the peripheral stalk, linking F(1) to F(0). This chain is ATP synthase subunit b, found in Actinobacillus pleuropneumoniae serotype 5b (strain L20).